We begin with the raw amino-acid sequence, 127 residues long: Small ribosomal subunit protein uS11 (127 aa).

The protein belongs to the universal ribosomal protein uS11 family. As to quaternary structure, part of the 30S ribosomal subunit. Interacts with proteins S7 and S18. Binds to IF-3.

Its function is as follows. Located on the platform of the 30S subunit, it bridges several disparate RNA helices of the 16S rRNA. Forms part of the Shine-Dalgarno cleft in the 70S ribosome. The polypeptide is Small ribosomal subunit protein uS11 (Streptococcus pyogenes serotype M1).